The following is a 329-amino-acid chain: GMP reductase (329 aa).

Cys-178 (thioimidate intermediate) is an active-site residue. Ile-207–Cys-230 contributes to the NADP(+) binding site.

It belongs to the IMPDH/GMPR family. GuaC type 2 subfamily.

It carries out the reaction IMP + NH4(+) + NADP(+) = GMP + NADPH + 2 H(+). Its function is as follows. Catalyzes the irreversible NADPH-dependent deamination of GMP to IMP. It functions in the conversion of nucleobase, nucleoside and nucleotide derivatives of G to A nucleotides, and in maintaining the intracellular balance of A and G nucleotides. This chain is GMP reductase, found in Lacticaseibacillus paracasei (strain ATCC 334 / BCRC 17002 / CCUG 31169 / CIP 107868 / KCTC 3260 / NRRL B-441) (Lactobacillus paracasei).